A 291-amino-acid polypeptide reads, in one-letter code: Acetyl-coenzyme A carboxylase carboxyl transferase subunit beta (291 aa).

A CoA carboxyltransferase N-terminal domain is found at 23–291 (VWHKCPSCTA…PPDLPVEESV (269 aa)). Zn(2+)-binding residues include Cys27, Cys30, Cys46, and Cys49. The C4-type zinc-finger motif lies at 27–49 (CPSCTAVLYRVELERNLEVCPKC).

It belongs to the AccD/PCCB family. Acetyl-CoA carboxylase is a heterohexamer composed of biotin carboxyl carrier protein (AccB), biotin carboxylase (AccC) and two subunits each of ACCase subunit alpha (AccA) and ACCase subunit beta (AccD). Requires Zn(2+) as cofactor.

Its subcellular location is the cytoplasm. The enzyme catalyses N(6)-carboxybiotinyl-L-lysyl-[protein] + acetyl-CoA = N(6)-biotinyl-L-lysyl-[protein] + malonyl-CoA. Its pathway is lipid metabolism; malonyl-CoA biosynthesis; malonyl-CoA from acetyl-CoA: step 1/1. Its function is as follows. Component of the acetyl coenzyme A carboxylase (ACC) complex. Biotin carboxylase (BC) catalyzes the carboxylation of biotin on its carrier protein (BCCP) and then the CO(2) group is transferred by the transcarboxylase to acetyl-CoA to form malonyl-CoA. The sequence is that of Acetyl-coenzyme A carboxylase carboxyl transferase subunit beta from Coxiella burnetii (strain RSA 331 / Henzerling II).